The primary structure comprises 102 residues: Small ribosomal subunit protein uS10 (102 aa).

This sequence belongs to the universal ribosomal protein uS10 family. In terms of assembly, part of the 30S ribosomal subunit.

In terms of biological role, involved in the binding of tRNA to the ribosomes. The chain is Small ribosomal subunit protein uS10 from Streptococcus pyogenes serotype M3 (strain SSI-1).